Reading from the N-terminus, the 368-residue chain is Endophilin-A2 (368 aa).

The membrane-binding amphipathic helix stretch occupies residues 1–21 (MSVAGLKKQFYKASQLVSEKV). The BAR domain maps to 18–249 (SEKVGGAEGT…LKRRVREASS (232 aa)). The segment at 60–87 (PNPASRAKLTMLNTVSKIRGQVKNPGYP) is required for dimerization upon membrane association. Residues 180-250 (DEELRQALEK…KRRVREASSR (71 aa)) are a coiled coil. Residues 218–254 (LVDAQLDYHRQAVQILEELADKLKRRVREASSRPRRE) are interaction with ARC. The disordered stretch occupies residues 243–309 (RVREASSRPR…SKSMPPLDQP (67 aa)). Basic and acidic residues predominate over residues 245–261 (REASSRPRREFKPRPQE). The residue at position 288 (Ser288) is a Phosphoserine. Thr298 bears the Phosphothreonine mark. One can recognise an SH3 domain in the interval 306–365 (LDQPSCKALYDFEPENDGELGFREGDLITLTNQIDENWYEGMLHGQSGFFPLSYVQVLVP). The residue at position 315 (Tyr315) is a Phosphotyrosine.

Belongs to the endophilin family. Interacts with ARC, SYNJ1 and DNM1. Interacts with PDCD6IP. Interacts with BIN2. As to expression, detected in brain and testis (at protein level). Ubiquitous.

It localises to the cytoplasm. Its subcellular location is the early endosome membrane. The protein resides in the cell projection. It is found in the podosome. Functionally, implicated in endocytosis. May recruit other proteins to membranes with high curvature. The polypeptide is Endophilin-A2 (Sh3gl1) (Rattus norvegicus (Rat)).